A 62-amino-acid polypeptide reads, in one-letter code: MTSPAAAGNGLFKFLRPKLRPQSTDIQAAAGWGVAAVTGALWVIQPWDFLRKTFIEKQEEEK.

The Mitochondrial matrix segment spans residues 2-25; the sequence is TSPAAAGNGLFKFLRPKLRPQSTD. The helical transmembrane segment at 26-44 threads the bilayer; sequence IQAAAGWGVAAVTGALWVI. Topologically, residues 45–62 are mitochondrial intermembrane; sequence QPWDFLRKTFIEKQEEEK.

This sequence belongs to the UQCR11/QCR10 family. As to quaternary structure, component of the ubiquinol-cytochrome c oxidoreductase (cytochrome b-c1 complex, complex III, CIII), a multisubunit enzyme composed of 3 respiratory subunits cytochrome b, cytochrome c1 and Rieske protein, 2 core protein subunits, and additional low-molecular weight protein subunits. The complex exists as an obligatory dimer and forms supercomplexes (SCs) in the inner mitochondrial membrane with cytochrome c oxidase (complex IV, CIV).

The protein localises to the mitochondrion inner membrane. In terms of biological role, component of the ubiquinol-cytochrome c oxidoreductase, a multisubunit transmembrane complex that is part of the mitochondrial electron transport chain which drives oxidative phosphorylation. The respiratory chain contains 3 multisubunit complexes succinate dehydrogenase (complex II, CII), ubiquinol-cytochrome c oxidoreductase (cytochrome b-c1 complex, complex III, CIII) and cytochrome c oxidase (complex IV, CIV), that cooperate to transfer electrons derived from NADH and succinate to molecular oxygen, creating an electrochemical gradient over the inner membrane that drives transmembrane transport and the ATP synthase. The cytochrome b-c1 complex catalyzes electron transfer from ubiquinol to cytochrome c, linking this redox reaction to translocation of protons across the mitochondrial inner membrane, with protons being carried across the membrane as hydrogens on the quinol. In the process called Q cycle, 2 protons are consumed from the matrix, 4 protons are released into the intermembrane space and 2 electrons are passed to cytochrome c. QCR10 has a role in CIII assembly and RIP1 stability. The chain is Ubiquinol-cytochrome c reductase complex 6.7 kDa protein from Solanum tuberosum (Potato).